The sequence spans 216 residues: Small ribosomal subunit protein uS3 (216 aa).

Residues 24 to 93 (IKEFLEYRLA…NPQIDVIDVS (70 aa)) enclose the KH type-2 domain.

This sequence belongs to the universal ribosomal protein uS3 family. In terms of assembly, part of the 30S ribosomal subunit.

Its function is as follows. Binds the lower part of the 30S subunit head. The sequence is that of Small ribosomal subunit protein uS3 from Pyrobaculum calidifontis (strain DSM 21063 / JCM 11548 / VA1).